The primary structure comprises 336 residues: Ketol-acid reductoisomerase (NADP(+)) 1 (336 aa).

The KARI N-terminal Rossmann domain maps to 2 to 181 (AKVYYEKDVT…GATRAGVLET (180 aa)). Residues 25–28 (YGSQ), arginine 48, serine 52, and 82–85 (DELQ) contribute to the NADP(+) site. Histidine 107 is a catalytic residue. Glycine 133 lines the NADP(+) pocket. Residues 182-327 (TFKEETETDL…RKLRGMMPFV (146 aa)) form the KARI C-terminal knotted domain. The Mg(2+) site is built by aspartate 190, glutamate 194, glutamate 226, and glutamate 230. Position 251 (serine 251) interacts with substrate.

Belongs to the ketol-acid reductoisomerase family. Mg(2+) serves as cofactor.

It catalyses the reaction (2R)-2,3-dihydroxy-3-methylbutanoate + NADP(+) = (2S)-2-acetolactate + NADPH + H(+). The catalysed reaction is (2R,3R)-2,3-dihydroxy-3-methylpentanoate + NADP(+) = (S)-2-ethyl-2-hydroxy-3-oxobutanoate + NADPH + H(+). Its pathway is amino-acid biosynthesis; L-isoleucine biosynthesis; L-isoleucine from 2-oxobutanoate: step 2/4. It participates in amino-acid biosynthesis; L-valine biosynthesis; L-valine from pyruvate: step 2/4. Functionally, involved in the biosynthesis of branched-chain amino acids (BCAA). Catalyzes an alkyl-migration followed by a ketol-acid reduction of (S)-2-acetolactate (S2AL) to yield (R)-2,3-dihydroxy-isovalerate. In the isomerase reaction, S2AL is rearranged via a Mg-dependent methyl migration to produce 3-hydroxy-3-methyl-2-ketobutyrate (HMKB). In the reductase reaction, this 2-ketoacid undergoes a metal-dependent reduction by NADPH to yield (R)-2,3-dihydroxy-isovalerate. This chain is Ketol-acid reductoisomerase (NADP(+)) 1, found in Bacillus anthracis.